Reading from the N-terminus, the 378-residue chain is 7-methylxanthine methyltransferase 1 (378 aa).

S-adenosyl-L-homocysteine is bound by residues Tyr-18, Cys-61, Asn-66, Asp-100, Leu-101, Ser-139, Phe-140, and Cys-156. Theobromine contacts are provided by Tyr-157, His-160, and Trp-161. Positions 178, 260, 262, and 263 each coordinate Mg(2+). Residue Tyr-362 participates in theobromine binding.

It belongs to the methyltransferase superfamily. Type-7 methyltransferase family. Mg(2+) serves as cofactor. In terms of tissue distribution, mainly expressed, at low levels, in leaves and fruits (grains). Also present, at lower levels, in roots, stamens and pistils.

It localises to the cytoplasm. It carries out the reaction 7-methylxanthine + S-adenosyl-L-methionine = theobromine + S-adenosyl-L-homocysteine + H(+). The protein operates within alkaloid biosynthesis. Involved in the biosynthesis of caffeine. Catalyzes the conversion of 7-methylxanthine (7mX) to theobromine and of paraxanthine to caffeine. This is 7-methylxanthine methyltransferase 1 from Coffea canephora (Robusta coffee).